A 2523-amino-acid chain; its full sequence is Non-reducing polyketide synthase Preu3 (2523 aa).

Residues 58–247 (LQSLASERRA…KILAMTGSFH (190 aa)) are N-terminal acylcarrier protein transacylase domain (SAT). A Ketosynthase family 3 (KS3) domain is found at 373–792 (DNAVAVVGMA…GSNGAMIVCQ (420 aa)). Catalysis depends on for beta-ketoacyl synthase activity residues Cys539, His674, and His715. Positions 900 to 1207 (CFGGQVKAFV…KAFGSLADAT (308 aa)) are malonyl-CoA:ACP transacylase (MAT) domain. Ser986 acts as the For acyl/malonyl transferase activity in catalysis. The N-terminal hotdog fold stretch occupies residues 1271 to 1398 (HELLTFSSFE…GLVAFGGTVE (128 aa)). Positions 1271 to 1573 (HELLTFSSFE…FTRVTVPGLR (303 aa)) constitute a PKS/mFAS DH domain. Residues 1301–1568 (LVKGHAVVAQ…ALGCRFTRVT (268 aa)) form a product template (PT) domain region. The Proton acceptor; for dehydratase activity role is filled by His1305. Residues 1421–1573 (ECDALRGSAT…FTRVTVPGLR (153 aa)) form a C-terminal hotdog fold region. Residue Asp1483 is the Proton donor; for dehydratase activity of the active site. The tract at residues 1579 to 1601 (ANGDARAQERPSGSRISPSPLAP) is disordered. Residues 1639-1713 (VDYLAQVKAL…KLAEYLAKTL (75 aa)) form the Carrier domain. O-(pantetheine 4'-phosphoryl)serine is present on Ser1673. Positions 1735–1757 (DAEQSSDESPYDSTDDSASGYGD) are disordered. The span at 1738 to 1749 (QSSDESPYDSTD) shows a compositional bias: acidic residues. The interval 1986–2085 (LEIGGGTGGT…MRQLLSSEGF (100 aa)) is methyltransferase (CMeT) domain. Residues 2218-2520 (LILHGGGHVL…RALEWLVEQC (303 aa)) form a thioesterase (TE) domain region.

Requires pantetheine 4'-phosphate as cofactor.

It carries out the reaction 3 malonyl-CoA + acetyl-CoA + S-adenosyl-L-methionine + H(+) = 3-methylorsellinate + S-adenosyl-L-homocysteine + 3 CO2 + 4 CoA. In terms of biological role, non-reducing polyketide synthase; part of a gene cluster that mediates the biosynthesis of a yet unidentified natural product. The first step in the pathway is performed by Preu3 that condenses one acetyl-CoA starter unit with 3 malonyl-CoA units. Preu3 also catalyzes one methylation step to produce 3-methylorsellinate, an intermediate that exhibits significant antibacterial activities against methicillin-resistant Staphylococcus aureus, multidrug-resistant Enterococcus faecalis, multidrug-resistant Enterococcus faecium, and multidrug-resistant Staphylococcus epidermidis. The polypeptide is Non-reducing polyketide synthase Preu3 (Preussia isomera (Coprophilous fungus)).